Here is a 118-residue protein sequence, read N- to C-terminus: Large ribosomal subunit protein bL20 (118 aa).

The protein belongs to the bacterial ribosomal protein bL20 family.

In terms of biological role, binds directly to 23S ribosomal RNA and is necessary for the in vitro assembly process of the 50S ribosomal subunit. It is not involved in the protein synthesizing functions of that subunit. In Clostridioides difficile (strain 630) (Peptoclostridium difficile), this protein is Large ribosomal subunit protein bL20.